Consider the following 391-residue polypeptide: Glycerol-3-phosphate dehydrogenase [NAD(+)] 1 (391 aa).

Residues Gly-41–Gly-46, Phe-129, Lys-152, and Ala-185 each bind NAD(+). Residue Lys-152 participates in substrate binding. Lys-245 acts as the Proton acceptor in catalysis. Positions 310 and 339 each coordinate NAD(+). Residue Arg-310–Asn-311 coordinates substrate.

Belongs to the NAD-dependent glycerol-3-phosphate dehydrogenase family.

It localises to the cytoplasm. The catalysed reaction is sn-glycerol 3-phosphate + NAD(+) = dihydroxyacetone phosphate + NADH + H(+). The protein is Glycerol-3-phosphate dehydrogenase [NAD(+)] 1 (GPD1) of Saccharomyces uvarum (Yeast).